The chain runs to 457 residues: tRNA-2-methylthio-N(6)-dimethylallyladenosine synthase (457 aa).

One can recognise an MTTase N-terminal domain in the interval 3 to 120 (KKVYVKTFGC…LPQMIDARRT (118 aa)). Residues C12, C49, C83, C157, C161, and C164 each contribute to the [4Fe-4S] cluster site. One can recognise a Radical SAM core domain in the interval 143–377 (RVEGPTAFVS…QATIEENVAR (235 aa)). In terms of domain architecture, TRAM spans 380 to 447 (QSMVGKVERI…PHSLRGELVL (68 aa)).

Belongs to the methylthiotransferase family. MiaB subfamily. Monomer. Requires [4Fe-4S] cluster as cofactor.

The protein resides in the cytoplasm. The catalysed reaction is N(6)-dimethylallyladenosine(37) in tRNA + (sulfur carrier)-SH + AH2 + 2 S-adenosyl-L-methionine = 2-methylsulfanyl-N(6)-dimethylallyladenosine(37) in tRNA + (sulfur carrier)-H + 5'-deoxyadenosine + L-methionine + A + S-adenosyl-L-homocysteine + 2 H(+). In terms of biological role, catalyzes the methylthiolation of N6-(dimethylallyl)adenosine (i(6)A), leading to the formation of 2-methylthio-N6-(dimethylallyl)adenosine (ms(2)i(6)A) at position 37 in tRNAs that read codons beginning with uridine. In Burkholderia multivorans (strain ATCC 17616 / 249), this protein is tRNA-2-methylthio-N(6)-dimethylallyladenosine synthase.